Here is a 1389-residue protein sequence, read N- to C-terminus: DNA-directed RNA polymerase subunit beta' (1389 aa).

Positions 73, 75, 88, and 91 each coordinate Zn(2+). Residues D464, D466, and D468 each coordinate Mg(2+). The Zn(2+) site is built by C810, C884, C891, and C894.

This sequence belongs to the RNA polymerase beta' chain family. In terms of assembly, the RNAP catalytic core consists of 2 alpha, 1 beta, 1 beta' and 1 omega subunit. When a sigma factor is associated with the core the holoenzyme is formed, which can initiate transcription. It depends on Mg(2+) as a cofactor. Requires Zn(2+) as cofactor.

It catalyses the reaction RNA(n) + a ribonucleoside 5'-triphosphate = RNA(n+1) + diphosphate. Its function is as follows. DNA-dependent RNA polymerase catalyzes the transcription of DNA into RNA using the four ribonucleoside triphosphates as substrates. This Pelagibacter ubique (strain HTCC1062) protein is DNA-directed RNA polymerase subunit beta'.